The following is a 315-amino-acid chain: 4-diphosphocytidyl-2-C-methyl-D-erythritol kinase (315 aa).

Residue Lys11 is part of the active site. An ATP-binding site is contributed by Pro99–Ala109. The active site involves Asp141.

The protein belongs to the GHMP kinase family. IspE subfamily.

It catalyses the reaction 4-CDP-2-C-methyl-D-erythritol + ATP = 4-CDP-2-C-methyl-D-erythritol 2-phosphate + ADP + H(+). Its pathway is isoprenoid biosynthesis; isopentenyl diphosphate biosynthesis via DXP pathway; isopentenyl diphosphate from 1-deoxy-D-xylulose 5-phosphate: step 3/6. In terms of biological role, catalyzes the phosphorylation of the position 2 hydroxy group of 4-diphosphocytidyl-2C-methyl-D-erythritol. The sequence is that of 4-diphosphocytidyl-2-C-methyl-D-erythritol kinase from Synechocystis sp. (strain ATCC 27184 / PCC 6803 / Kazusa).